Reading from the N-terminus, the 277-residue chain is Caspase-3 (277 aa).

N-acetylmethionine is present on Met1. Propeptides lie at residues Met1–Asp9 and Ser10–Asp28. N6-acetyllysine is present on Lys11. Residue Ser26 is modified to Phosphoserine. Residues His121 and Cys163 contribute to the active site. Cys163 carries the S-nitrosocysteine; in inhibited form modification.

Belongs to the peptidase C14A family. In terms of assembly, heterotetramer that consists of two anti-parallel arranged heterodimers, each one formed by a 17 kDa (p17) and a 12 kDa (p12) subunit. Interacts with BIRC6/bruce. Post-translationally, cleavage by granzyme B, caspase-6, caspase-8 and caspase-10 generates the two active subunits. Additional processing of the propeptides is likely due to the autocatalytic activity of the activated protease. Active heterodimers between the small subunit of caspase-7 protease and the large subunit of caspase-3 also occur and vice versa. In terms of processing, S-nitrosylated on its catalytic site cysteine in unstimulated cell lines and denitrosylated upon activation of the Fas apoptotic pathway, associated with an increase in intracellular caspase activity. Fas therefore activates caspase-3 not only by inducing the cleavage of the caspase zymogen to its active subunits, but also by stimulating the denitrosylation of its active site thiol. Ubiquitinated by BIRC6; this activity is inhibited by DIABLO/SMAC. Highest expression in spleen, lung, liver, kidney and heart. Lower expression in brain, skeletal muscle and testis.

It is found in the cytoplasm. The enzyme catalyses Strict requirement for an Asp residue at positions P1 and P4. It has a preferred cleavage sequence of Asp-Xaa-Xaa-Asp-|- with a hydrophobic amino-acid residue at P2 and a hydrophilic amino-acid residue at P3, although Val or Ala are also accepted at this position.. Inhibited by BIRC6; following inhibition of BIRC6-caspase binding by DIABLO/SMAC, BIRC6 is subjected to caspase cleavage, leading to an increase in active caspases. Functionally, thiol protease that acts as a major effector caspase involved in the execution phase of apoptosis. Following cleavage and activation by initiator caspases (CASP8, CASP9 and/or CASP10), mediates execution of apoptosis by catalyzing cleavage of many proteins. At the onset of apoptosis, it proteolytically cleaves poly(ADP-ribose) polymerase PARP1 at a '216-Asp-|-Gly-217' bond. Cleaves and activates sterol regulatory element binding proteins (SREBPs) between the basic helix-loop-helix leucine zipper domain and the membrane attachment domain. Cleaves and activates caspase-6, -7 and -9 (CASP6, CASP7 and CASP9, respectively). Cleaves and inactivates interleukin-18 (IL18). Triggers cell adhesion in sympathetic neurons through RET cleavage. Cleaves IL-1 beta between an Asp and an Ala, releasing the mature cytokine which is involved in a variety of inflammatory processes. Cleaves and inhibits serine/threonine-protein kinase AKT1 in response to oxidative stress. Acts as an inhibitor of type I interferon production during virus-induced apoptosis by mediating cleavage of antiviral proteins CGAS, IRF3 and MAVS, thereby preventing cytokine overproduction. Also involved in pyroptosis by mediating cleavage and activation of gasdermin-E (GSDME). Cleaves XRCC4 and phospholipid scramblase proteins XKR4, XKR8 and XKR9, leading to promote phosphatidylserine exposure on apoptotic cell surface. Cleaves BIRC6 following inhibition of BIRC6-caspase binding by DIABLO/SMAC. The chain is Caspase-3 (Casp3) from Mus musculus (Mouse).